The chain runs to 342 residues: Phosphate acyltransferase (342 aa).

It belongs to the PlsX family. In terms of assembly, homodimer. Probably interacts with PlsY.

The protein resides in the cytoplasm. The enzyme catalyses a fatty acyl-[ACP] + phosphate = an acyl phosphate + holo-[ACP]. It functions in the pathway lipid metabolism; phospholipid metabolism. Its function is as follows. Catalyzes the reversible formation of acyl-phosphate (acyl-PO(4)) from acyl-[acyl-carrier-protein] (acyl-ACP). This enzyme utilizes acyl-ACP as fatty acyl donor, but not acyl-CoA. This chain is Phosphate acyltransferase, found in Shewanella sediminis (strain HAW-EB3).